A 328-amino-acid chain; its full sequence is Tryptophan--tRNA ligase (328 aa).

ATP-binding positions include 8–10 (RPT) and 16–17 (GH). The 'HIGH' region motif lies at 9-17 (PTGKLHIGH). Residue Asp-136 coordinates L-tryptophan. Residues 148 to 150 (GED), Leu-186, and 193 to 197 (KMSKS) each bind ATP. The 'KMSKS' region signature appears at 193–197 (KMSKS).

Belongs to the class-I aminoacyl-tRNA synthetase family. Homodimer.

It localises to the cytoplasm. It catalyses the reaction tRNA(Trp) + L-tryptophan + ATP = L-tryptophyl-tRNA(Trp) + AMP + diphosphate + H(+). Its function is as follows. Catalyzes the attachment of tryptophan to tRNA(Trp). This chain is Tryptophan--tRNA ligase, found in Thermotoga maritima (strain ATCC 43589 / DSM 3109 / JCM 10099 / NBRC 100826 / MSB8).